Here is a 125-residue protein sequence, read N- to C-terminus: Small ribosomal subunit protein uS12 (125 aa).

Position 89 is a 3-methylthioaspartic acid (aspartate 89). A disordered region spans residues 106–125 (GVKDRKQSRSKYGAKRPKKA). Residues 113–125 (SRSKYGAKRPKKA) are compositionally biased toward basic residues.

It belongs to the universal ribosomal protein uS12 family. As to quaternary structure, part of the 30S ribosomal subunit. Contacts proteins S8 and S17. May interact with IF1 in the 30S initiation complex.

Functionally, with S4 and S5 plays an important role in translational accuracy. Interacts with and stabilizes bases of the 16S rRNA that are involved in tRNA selection in the A site and with the mRNA backbone. Located at the interface of the 30S and 50S subunits, it traverses the body of the 30S subunit contacting proteins on the other side and probably holding the rRNA structure together. The combined cluster of proteins S8, S12 and S17 appears to hold together the shoulder and platform of the 30S subunit. The polypeptide is Small ribosomal subunit protein uS12 (Variovorax paradoxus (strain S110)).